Here is a 162-residue protein sequence, read N- to C-terminus: NADH-quinone oxidoreductase subunit I (162 aa).

4Fe-4S ferredoxin-type domains lie at 54-83 (RRYENGEERCIACKLCEAVCPAMAITIESE) and 93-122 (TRYDIDLTKCIFCGFCEESCPVDSIVETQI). [4Fe-4S] cluster-binding residues include Cys63, Cys66, Cys69, Cys73, Cys102, Cys105, Cys108, and Cys112.

It belongs to the complex I 23 kDa subunit family. NDH-1 is composed of 14 different subunits. Subunits NuoA, H, J, K, L, M, N constitute the membrane sector of the complex. [4Fe-4S] cluster is required as a cofactor.

The protein localises to the cell inner membrane. The enzyme catalyses a quinone + NADH + 5 H(+)(in) = a quinol + NAD(+) + 4 H(+)(out). In terms of biological role, NDH-1 shuttles electrons from NADH, via FMN and iron-sulfur (Fe-S) centers, to quinones in the respiratory chain. The immediate electron acceptor for the enzyme in this species is believed to be ubiquinone. Couples the redox reaction to proton translocation (for every two electrons transferred, four hydrogen ions are translocated across the cytoplasmic membrane), and thus conserves the redox energy in a proton gradient. This Burkholderia vietnamiensis (strain G4 / LMG 22486) (Burkholderia cepacia (strain R1808)) protein is NADH-quinone oxidoreductase subunit I.